Reading from the N-terminus, the 239-residue chain is Fatty acid metabolism regulator protein (239 aa).

Residues 6–74 (QSPAGFAEEY…HGKPTKVNNF (69 aa)) enclose the HTH gntR-type domain. The segment at residues 34–53 (ERELSELIGVTRTTLREVLQ) is a DNA-binding region (H-T-H motif).

As to quaternary structure, homodimer.

It localises to the cytoplasm. Functionally, multifunctional regulator of fatty acid metabolism. Represses transcription of at least eight genes required for fatty acid transport and beta-oxidation including fadA, fadB, fadD, fadL and fadE. Activates transcription of at least three genes required for unsaturated fatty acid biosynthesis: fabA, fabB and iclR, the gene encoding the transcriptional regulator of the aceBAK operon encoding the glyoxylate shunt enzymes. Binding of FadR is specifically inhibited by long chain fatty acyl-CoA compounds. In Salmonella typhi, this protein is Fatty acid metabolism regulator protein.